Here is a 410-residue protein sequence, read N- to C-terminus: MSSKEKKSVTILTESQLSSRAFKDEAYEFYKELRKSQALYPLSLGALGKGWLISRYDDAIHLLKNEKLKKNYENVFTAKEKRPALLKNEETLTKHMLNSDPPDHNRLRTLVQKAFTHRMILQLEDKIQHIADSLLDKVQPNKFMNLVDDYAFPLPIIVISEMLGIPLEDRQKFRVWSQAIIDFSDAPERLQENDHLLGEFVEYLESLVRKKRREPAGDLISALIQAESEGTQLSTEELYSMIMLLIVAGHETTVNLITNMTYALMCHHDQLEKLRQQPDLMNSAIEEALRFHSPVELTTIRWTAEPFILHGQEIKRKDVIIISLASANRDEKIFPNADIFDIERKNNRHIAFGHGNHFCLGAQLARLEAKIAISTLLRRCPNIQLKGEKKQMKWKGNFLMRALEELPISF.

C359 lines the heme pocket.

Belongs to the cytochrome P450 family. It depends on heme as a cofactor.

In Bacillus subtilis (strain 168), this protein is Cytochrome P450 (cypA).